We begin with the raw amino-acid sequence, 137 residues long: Large ribosomal subunit protein uL16c (137 aa).

This sequence belongs to the universal ribosomal protein uL16 family. Part of the 50S ribosomal subunit.

It is found in the plastid. It localises to the chloroplast. The polypeptide is Large ribosomal subunit protein uL16c (Adiantum capillus-veneris (Maidenhair fern)).